A 443-amino-acid polypeptide reads, in one-letter code: Trigger factor (443 aa).

The PPIase FKBP-type domain maps to 161–246; it reads GDKVVIDFQG…IKKIMEGKLP (86 aa).

Belongs to the FKBP-type PPIase family. Tig subfamily.

The protein resides in the cytoplasm. The catalysed reaction is [protein]-peptidylproline (omega=180) = [protein]-peptidylproline (omega=0). Its function is as follows. Involved in protein export. Acts as a chaperone by maintaining the newly synthesized protein in an open conformation. Functions as a peptidyl-prolyl cis-trans isomerase. This Legionella pneumophila subsp. pneumophila (strain Philadelphia 1 / ATCC 33152 / DSM 7513) protein is Trigger factor.